We begin with the raw amino-acid sequence, 270 residues long: Hematopoietically-expressed homeobox protein HHEX (270 aa).

An interaction with SOX13 region spans residues 1 to 137 (MQYPHPGPAA…PFLQRPLHKR (137 aa)). Ser53 bears the Phosphoserine mark. Positions 137–196 (RKGGQVRFSNDQTIELEKKFETQKYLSPPERKRLAKMLQLSERQVKTWFQNRRAKWRRLK) form a DNA-binding region, homeobox. The required for WNT signaling induction stretch occupies residues 137–270 (RKGGQVRFSN…EGDKSYFNAG (134 aa)). Residues 194–270 (RLKQENPQSN…EGDKSYFNAG (77 aa)) are disordered. Over residues 222–241 (PSEQNKGASLDSSQCSPSPA) the composition is skewed to polar residues. The span at 244-260 (EDLESEISEDSDQEVDI) shows a compositional bias: acidic residues.

In terms of assembly, interacts with CD81; the interaction prevents nuclear translocation of HHEX. Interacts (via N-terminus) with SOX13; abolishes the SOX13-mediated inhibition of WNT-mediated transcriptional activity via competitive inhibition of the SOX13-TCF7 complex. Interacts with EIF4E; the interaction inhibits EIF4E-mediated mRNA nuclear export. In terms of tissue distribution, liver and promyelocytic leukemia cell line HL-60.

It is found in the nucleus. The protein resides in the nuclear body. Its subcellular location is the cytoplasm. In terms of biological role, recognizes the DNA sequence 5'-ATTAA-3'. Transcriptional repressor. Activator of WNT-mediated transcription in conjunction with CTNNB1. Establishes anterior identity at two levels; acts early to enhance canonical WNT-signaling by repressing expression of TLE4, and acts later to inhibit NODAL-signaling by directly targeting NODAL. Inhibits EIF4E-mediated mRNA nuclear export. May play a role in hematopoietic differentiation. This chain is Hematopoietically-expressed homeobox protein HHEX (HHEX), found in Homo sapiens (Human).